The following is a 207-amino-acid chain: Transcription factor DYT1 (207 aa).

Positions M1–R38 are disordered. The region spanning N28–L77 is the bHLH domain.

Homodimer. Mostly expressed in anthers, and, to a lower extent, in young inflorescences undergoing meiosis and siliques.

It is found in the nucleus. Its function is as follows. Transcription factor. Involved in the control of tapetum development. Required for male fertility and pollen differentiation, especially during callose deposition. This chain is Transcription factor DYT1, found in Arabidopsis thaliana (Mouse-ear cress).